Consider the following 345-residue polypeptide: Protein RecA (345 aa).

68–75 (GVESSGKT) provides a ligand contact to ATP.

Belongs to the RecA family.

It localises to the cytoplasm. Functionally, can catalyze the hydrolysis of ATP in the presence of single-stranded DNA, the ATP-dependent uptake of single-stranded DNA by duplex DNA, and the ATP-dependent hybridization of homologous single-stranded DNAs. It interacts with LexA causing its activation and leading to its autocatalytic cleavage. The sequence is that of Protein RecA from Aquifex aeolicus (strain VF5).